A 1162-amino-acid chain; its full sequence is Reticulon-4 (1162 aa).

Position 1 is an N-acetylmethionine (Met1). The segment at Met1–Ile183 is disordered. The Cytoplasmic segment spans residues Met1–Gly988. Residues Ser7 and Ser16 each carry the phosphoserine modification. Residues Ser7–Ser16 show a composition bias toward low complexity. Acidic residues predominate over residues Glu31–Glu54. Positions Pro85–Ala99 are enriched in pro residues. Ser105 is modified (phosphoserine). The segment covering Ser109–Lys127 has biased composition (low complexity). 5 positions are modified to phosphoserine: Ser145, Ser165, Ser167, Ser329, and Ser344. Phosphothreonine is present on Thr348. The span at Ser408–Asn422 shows a compositional bias: basic and acidic residues. Residues Ser408–Glu432 form a disordered region. Ser426 carries the phosphoserine modification. The residue at position 430 (Thr430) is a Phosphothreonine. 5 positions are modified to phosphoserine: Ser489, Ser690, Ser727, Ser768, and Ser832. The tract at residues Glu711–Ser730 is disordered. The span at Val713 to Ser730 shows a compositional bias: acidic residues. Thr834 is subject to Phosphothreonine. Phosphoserine occurs at positions 857 and 961. In terms of domain architecture, Reticulon spans Val975–Glu1162. A helical membrane pass occupies residues Val989–Val1009. The Lumenal portion of the chain corresponds to Thr1010–Arg1078. An N6-acetyllysine modification is found at Lys1074. Residues Leu1079–Thr1099 traverse the membrane as a helical segment. Topologically, residues Tyr1100–Glu1162 are cytoplasmic.

In terms of assembly, binds to RTN4R. Interacts with ATL1. Interacts with TMEM170A. Interacts with RTN4IP1. Interacts in trans with CNTNAP1. Interacts with REEP5. Interacts with GPR50. Interacts with synaptic plasticity regulator PANTS; the interaction results in enhanced RTN4-mediated inhibition of AMPA receptor clustering. As to quaternary structure, homodimer. Interacts with BAD/Bcl-xl and BCL2. Interact with RTN3. Interacts with NGBR. Interacts with SPTLC1. Interacts with GRAMD4. Interacts with CDH5. Interacts with BACE1 and BACE2. Interacts with REEP5. Interacts with RETREG3. In terms of assembly, interacts with BACE1 and BACE2. Interacts with TMEM33. In terms of tissue distribution, expressed in cardiomyocytes (at protein level). Highly expressed in brain but not deteceted in aorta, femoral and carotid arteries. Main isoform expressed in neurons. Expressed in cardiomyocytes (at protein level). Expressed in splenocytes, T-cells, B-cells, bone marrow derived dendritic cells and macrophages (at protein level). Expressed in neurons. Highly expressed in endothelial cells and vascular smooth muscle cells, including blood vessels and mesenteric arteries. Expressed in bronchial and alveolar epithelial cells as well as vascular endothelial cells of lungs. As to expression, expressed in B-cells, bone marrow dendritic cells and macrophages (at protein level). In terms of tissue distribution, expressed in cardiomyocytes. Expressed at very low levels in neurons.

It localises to the endoplasmic reticulum membrane. Its subcellular location is the cell membrane. The protein localises to the synapse. The protein resides in the cell junction. Functionally, required to induce the formation and stabilization of endoplasmic reticulum (ER) tubules. They regulate membrane morphogenesis in the ER by promoting tubular ER production. They influence nuclear envelope expansion, nuclear pore complex formation and proper localization of inner nuclear membrane proteins. However each isoform have specific functions mainly depending on their tissue expression specificities. In terms of biological role, developmental neurite growth regulatory factor with a role as a negative regulator of axon-axon adhesion and growth, and as a facilitator of neurite branching. Regulates neurite fasciculation, branching and extension in the developing nervous system. Involved in down-regulation of growth, stabilization of wiring and restriction of plasticity in the adult CNS. Regulates the radial migration of cortical neurons via an RTN4R-LINGO1 containing receptor complex. Acts as a negative regulator of central nervous system angiogenesis. Inhibits spreading, migration and sprouting of primary brain microvascular endothelial cells (MVECs). Also induces the retraction of MVECs lamellipodia and filopodia in a ROCK pathway-dependent manner. Mainly function in endothelial cells and vascular smooth muscle cells, is also involved in immune system regulation. Modulator of vascular remodeling, promotes the migration of endothelial cells but inhibits the migration of vascular smooth muscle cells. Regulates endothelial sphingolipid biosynthesis with direct effects on vascular function and blood pressure. Inhibits serine palmitoyltransferase, SPTLC1, the rate-limiting enzyme of the novo sphingolipid biosynthetic pathway, thereby controlling production of endothelial sphingosine-1-phosphate (S1P). Required to promote macrophage homing and functions such as cytokine/chemokine gene expression involved in angiogenesis, arteriogenesis and tissue repair. Mediates ICAM1 induced transendothelial migration of leukocytes such as monocytes and neutrophils and acute inflammation. Necessary for immune responses triggered by nucleic acid sensing TLRs, such as TLR9, is required for proper TLR9 location to endolysosomes. Also involved in immune response to LPS. Plays a role in liver regeneration through the modulation of hepatocytes proliferation. Reduces the anti-apoptotic activity of Bcl-xl and Bcl-2. This is likely consecutive to their change in subcellular location, from the mitochondria to the endoplasmic reticulum, after binding and sequestration. With isoform C, inhibits BACE1 activity and amyloid precursor protein processing. Its function is as follows. Regulates cardiomyocyte apoptosis upon hypoxic conditions. With isoform B, inhibits BACE1 activity and amyloid precursor protein processing. This chain is Reticulon-4, found in Mus musculus (Mouse).